The chain runs to 80 residues: Clavanin-E (80 aa).

The signal sequence occupies residues Met1 to Ser19. Positions Leu20–Lys29 are excised as a propeptide. Phe52 is subject to Phenylalanine amide. Residues Asp54–Gln80 constitute a propeptide that is removed on maturation.

The protein resides in the secreted. Has antimicrobial activity. The protein is Clavanin-E of Styela clava (Sea squirt).